A 252-amino-acid chain; its full sequence is D-aminoacyl-tRNA deacylase (252 aa).

This sequence belongs to the DtdA deacylase family. As to quaternary structure, monomer. It depends on Zn(2+) as a cofactor.

The enzyme catalyses a D-aminoacyl-tRNA + H2O = a tRNA + a D-alpha-amino acid + H(+). It catalyses the reaction glycyl-tRNA(Ala) + H2O = tRNA(Ala) + glycine + H(+). In terms of biological role, D-aminoacyl-tRNA deacylase with broad substrate specificity. By recycling D-aminoacyl-tRNA to D-amino acids and free tRNA molecules, this enzyme counteracts the toxicity associated with the formation of D-aminoacyl-tRNA entities in vivo. This Pyrobaculum neutrophilum (strain DSM 2338 / JCM 9278 / NBRC 100436 / V24Sta) (Thermoproteus neutrophilus) protein is D-aminoacyl-tRNA deacylase.